Consider the following 161-residue polypeptide: Vasotocin-neurophysin VT (161 aa).

Positions 1–19 (MAEPSLPLSFLCLLALSSA) are cleaved as a signal peptide. Cysteines 20 and 25 form a disulfide. Glycine amide is present on Gly-28. Cystine bridges form between Cys-41–Cys-85, Cys-44–Cys-58, Cys-52–Cys-75, Cys-59–Cys-65, Cys-92–Cys-104, Cys-98–Cys-116, and Cys-105–Cys-110.

Belongs to the vasopressin/oxytocin family. Post-translationally, seven disulfide bonds are present in neurophysin.

Its subcellular location is the secreted. Vasotocin is an antidiuretic hormone. The polypeptide is Vasotocin-neurophysin VT (Gallus gallus (Chicken)).